The primary structure comprises 243 residues: MQSNHDSDASQAGDRPARPALRPLTPVEGRVLGVLVEKQHTVPDTYPLSLNALASGCNQKTARAPVMNVSEADILEAIDGLKGLSLVFEGSSSRVPRFEHNMQRVLAVPSQSVALLAMLLLRGPQTAAELRLNTARLHGFADISSVEAFLDELASHAPPFVVRLPRAPGARENRWMHLLSGEVSAAADADDADRTTGGATAAPGELEQLRAEQQALTEKVAKLQSLVEHMAGQLGIPVDEFLD.

Residues 1-23 (MQSNHDSDASQAGDRPARPALRP) form a disordered region.

This sequence belongs to the UPF0502 family.

The sequence is that of UPF0502 protein H16_B1091 from Cupriavidus necator (strain ATCC 17699 / DSM 428 / KCTC 22496 / NCIMB 10442 / H16 / Stanier 337) (Ralstonia eutropha).